A 334-amino-acid chain; its full sequence is Hematopoietic SH2 domain-containing protein (334 aa).

The SH2 domain occupies 34–125; that stretch reads WFHGTISREA…PFGELLTQAC (92 aa). 2 disordered regions span residues 157–181 and 254–280; these read EVQR…KGEF and EDSC…ATFR. The segment covering 258-267 has biased composition (polar residues); the sequence is AATTSLQNPA.

As to quaternary structure, interacts with FES and TNK2. May be phosphorylated by FES and ACK1. As to expression, predominantly expressed in spleen and thymus. Appears not to be expressed in heart, brain, liver, kidney, embryo, lung and ovary.

It is found in the cytoplasm. It localises to the mitochondrion. Adapter protein involved in tyrosine kinase and CD28 signaling. May be a modulator of the apoptotic response through its ability to affect mitochondrial stability. This is Hematopoietic SH2 domain-containing protein (Hsh2d) from Mus musculus (Mouse).